A 604-amino-acid chain; its full sequence is Glutamine--fructose-6-phosphate aminotransferase [isomerizing] (604 aa).

Cys2 acts as the Nucleophile; for GATase activity in catalysis. The 217-residue stretch at 2-218 folds into the Glutamine amidotransferase type-2 domain; sequence CGIVGVVGNR…DKELVILTKD (217 aa). 2 consecutive SIS domains span residues 284 to 423 and 456 to 594; these read IVKT…ANGK and VEKL…VDKP. The active-site For Fru-6P isomerization activity is Lys599.

Homodimer.

The protein localises to the cytoplasm. It carries out the reaction D-fructose 6-phosphate + L-glutamine = D-glucosamine 6-phosphate + L-glutamate. Functionally, catalyzes the first step in hexosamine metabolism, converting fructose-6P into glucosamine-6P using glutamine as a nitrogen source. The polypeptide is Glutamine--fructose-6-phosphate aminotransferase [isomerizing] (Streptococcus pyogenes serotype M6 (strain ATCC BAA-946 / MGAS10394)).